A 234-amino-acid chain; its full sequence is Venom allergen 3 (234 aa).

The N-terminal stretch at 1–22 (MELIVSILWLAITAENLANTLA) is a signal peptide. Disulfide bonds link cysteine 26-cysteine 41, cysteine 31-cysteine 125, cysteine 52-cysteine 118, and cysteine 198-cysteine 216. In terms of domain architecture, SCP spans 69–218 (VNKHNELRQR…WTKHYLVCNY (150 aa)). Positions 80–99 (ASGKEMRGTNGPQPPAVKMP) are disordered.

The protein belongs to the CRISP family. Expressed by the venom gland.

It localises to the secreted. This is Venom allergen 3 from Solenopsis invicta (Red imported fire ant).